A 179-amino-acid polypeptide reads, in one-letter code: ATP synthase subunit delta (179 aa).

The protein belongs to the ATPase delta chain family. In terms of assembly, F-type ATPases have 2 components, F(1) - the catalytic core - and F(0) - the membrane proton channel. F(1) has five subunits: alpha(3), beta(3), gamma(1), delta(1), epsilon(1). F(0) has three main subunits: a(1), b(2) and c(10-14). The alpha and beta chains form an alternating ring which encloses part of the gamma chain. F(1) is attached to F(0) by a central stalk formed by the gamma and epsilon chains, while a peripheral stalk is formed by the delta and b chains.

The protein localises to the cell membrane. F(1)F(0) ATP synthase produces ATP from ADP in the presence of a proton or sodium gradient. F-type ATPases consist of two structural domains, F(1) containing the extramembraneous catalytic core and F(0) containing the membrane proton channel, linked together by a central stalk and a peripheral stalk. During catalysis, ATP synthesis in the catalytic domain of F(1) is coupled via a rotary mechanism of the central stalk subunits to proton translocation. Functionally, this protein is part of the stalk that links CF(0) to CF(1). It either transmits conformational changes from CF(0) to CF(1) or is implicated in proton conduction. The polypeptide is ATP synthase subunit delta (Ureaplasma parvum serovar 3 (strain ATCC 27815 / 27 / NCTC 11736)).